The following is a 148-amino-acid chain: UPF0179 protein Mevan_0979 (148 aa).

The protein belongs to the UPF0179 family.

The sequence is that of UPF0179 protein Mevan_0979 from Methanococcus vannielii (strain ATCC 35089 / DSM 1224 / JCM 13029 / OCM 148 / SB).